Consider the following 403-residue polypeptide: Tyrosine--tRNA ligase (403 aa).

A 'HIGH' region motif is present at residues 42–51; that stretch reads PTAPDLHLGH. A 'KMSKS' region motif is present at residues 226-230; it reads KMSKS. An ATP-binding site is contributed by Lys-229. One can recognise an S4 RNA-binding domain in the interval 339 to 400; that stretch reads LRIASLLTAA…GKRNFARVAL (62 aa).

It belongs to the class-I aminoacyl-tRNA synthetase family. TyrS type 2 subfamily. As to quaternary structure, homodimer.

The protein localises to the cytoplasm. It catalyses the reaction tRNA(Tyr) + L-tyrosine + ATP = L-tyrosyl-tRNA(Tyr) + AMP + diphosphate + H(+). Catalyzes the attachment of tyrosine to tRNA(Tyr) in a two-step reaction: tyrosine is first activated by ATP to form Tyr-AMP and then transferred to the acceptor end of tRNA(Tyr). This chain is Tyrosine--tRNA ligase, found in Xanthomonas campestris pv. campestris (strain ATCC 33913 / DSM 3586 / NCPPB 528 / LMG 568 / P 25).